The following is a 323-amino-acid chain: GDSL esterase/lipase At5g03980 (323 aa).

The first 21 residues, 1–21 (MSTTKALSLLVFILFVSLVHS), serve as a signal peptide directing secretion. Catalysis depends on S36, which acts as the Nucleophile. N77 is a glycosylation site (N-linked (GlcNAc...) asparagine). Catalysis depends on residues D294 and H297.

The protein belongs to the 'GDSL' lipolytic enzyme family.

The protein localises to the secreted. The sequence is that of GDSL esterase/lipase At5g03980 from Arabidopsis thaliana (Mouse-ear cress).